Consider the following 64-residue polypeptide: Large ribosomal subunit protein bL33 (64 aa).

This sequence belongs to the bacterial ribosomal protein bL33 family.

The polypeptide is Large ribosomal subunit protein bL33 (Gloeothece citriformis (strain PCC 7424) (Cyanothece sp. (strain PCC 7424))).